The primary structure comprises 179 residues: M-phase-specific PLK1-interacting protein (179 aa).

Residues 1–135 (MQRQNFRPPT…RVREKRMSNE (135 aa)) are disordered. Position 37 is an asymmetric dimethylarginine (Arg-37). Residues Ser-40 and Ser-47 each carry the phosphoserine modification. Position 51 is a phosphothreonine (Thr-51). Arg-57 carries the omega-N-methylarginine modification. 2 positions are modified to asymmetric dimethylarginine: Arg-59 and Arg-68. Positions 60–71 (PYGSSHSPRHGG) are enriched in low complexity. Ser-72 carries the phosphoserine modification. An Asymmetric dimethylarginine modification is found at Arg-77. Positions 79-109 (GSPSPGGYPGSYSRSPAGSQQQFGYSPGQQQ) are enriched in low complexity. Residues Ser-80, Ser-82, Ser-93, Ser-104, and Ser-115 each carry the phosphoserine modification. The segment covering 110–122 (THPQGSPRTSTPF) has biased composition (polar residues). At Arg-117 the chain carries Omega-N-methylarginine. Thr-120 carries the post-translational modification Phosphothreonine. Ser-124 and Ser-133 each carry phosphoserine.

In terms of assembly, interacts with PLK1; phosphorylation-dependent. Phosphorylated during mitosis in the cell cycle probably by CDK1. Expressed at highest levels in liver and kidney; intermediate expression in skeletal muscle, pancreas, heart and placenta; low expression in brain and lung. Expressed in epidermis and hair follicles.

The protein resides in the nucleus. Its subcellular location is the cytoplasm. The protein localises to the cytoskeleton. It is found in the microtubule organizing center. It localises to the centrosome. Functionally, may play a role in maintenance of cell cycle integrity by regulating mitosis or cytokinesis. The polypeptide is M-phase-specific PLK1-interacting protein (MPLKIP) (Homo sapiens (Human)).